Reading from the N-terminus, the 301-residue chain is Probable enoyl-CoA hydratase 2, mitochondrial (301 aa).

A mitochondrion-targeting transit peptide spans 1 to 32; it reads MSFVKYLRRDNLLQLAGKPSLSRNYILQTCRT. Substrate is bound by residues 105–109 and Gly152; that span reads AGADL.

The protein belongs to the enoyl-CoA hydratase/isomerase family.

The protein resides in the mitochondrion. It carries out the reaction a (3S)-3-hydroxyacyl-CoA = a (2E)-enoyl-CoA + H2O. The catalysed reaction is a 4-saturated-(3S)-3-hydroxyacyl-CoA = a (3E)-enoyl-CoA + H2O. It participates in lipid metabolism; fatty acid beta-oxidation. In terms of biological role, straight-chain enoyl-CoA thioesters from C4 up to at least C16 are processed, although with decreasing catalytic rate. This is Probable enoyl-CoA hydratase 2, mitochondrial from Arabidopsis thaliana (Mouse-ear cress).